The primary structure comprises 494 residues: Xylan glycosyltransferase MUCI21 (494 aa).

The Cytoplasmic segment spans residues 1–40 (MRQNLKKVAQIKVDESKKLFPYVFRVKTSCGNCAKRSKPK). Residues 41–61 (LIYLLIFSLISSCFVFAPQLL) form a helical; Signal-anchor for type II membrane protein membrane-spanning segment. Over 62–494 (CFPYPSALFL…LIDAYAKSIR (433 aa)) the chain is Lumenal. Asn-375 carries an N-linked (GlcNAc...) asparagine glycan.

The protein belongs to the glycosyltransferase 61 family.

The protein localises to the golgi apparatus membrane. Functionally, glycosyletransferase required for the proper composition and structural properties of released seed coat mucilage. Required for the production of highly branched xylan polymers in seed coat mucilage. Facilitates the addition of xylose residues directly to the xylan backbone. Xylan with xylose side chains seems to be necessary for pectin attachment to the seed surface. Essential for xylan synthesis in seed coat epidermal (SCE) cells. In Arabidopsis thaliana (Mouse-ear cress), this protein is Xylan glycosyltransferase MUCI21.